The chain runs to 328 residues: 4-hydroxy-3-methylbut-2-enyl diphosphate reductase (328 aa).

Cys13 serves as a coordination point for [4Fe-4S] cluster. (2E)-4-hydroxy-3-methylbut-2-enyl diphosphate-binding residues include His41 and His75. His41 and His75 together coordinate dimethylallyl diphosphate. Residues His41 and His75 each coordinate isopentenyl diphosphate. Cys97 serves as a coordination point for [4Fe-4S] cluster. His125 provides a ligand contact to (2E)-4-hydroxy-3-methylbut-2-enyl diphosphate. His125 lines the dimethylallyl diphosphate pocket. His125 is an isopentenyl diphosphate binding site. The Proton donor role is filled by Glu127. Thr168 is a (2E)-4-hydroxy-3-methylbut-2-enyl diphosphate binding site. Cys229 contributes to the [4Fe-4S] cluster binding site. Positions 257, 258, 259, and 306 each coordinate (2E)-4-hydroxy-3-methylbut-2-enyl diphosphate. Dimethylallyl diphosphate contacts are provided by Ser257, Ser258, Asn259, and Ser306. 4 residues coordinate isopentenyl diphosphate: Ser257, Ser258, Asn259, and Ser306.

It belongs to the IspH family. [4Fe-4S] cluster is required as a cofactor.

The enzyme catalyses isopentenyl diphosphate + 2 oxidized [2Fe-2S]-[ferredoxin] + H2O = (2E)-4-hydroxy-3-methylbut-2-enyl diphosphate + 2 reduced [2Fe-2S]-[ferredoxin] + 2 H(+). It carries out the reaction dimethylallyl diphosphate + 2 oxidized [2Fe-2S]-[ferredoxin] + H2O = (2E)-4-hydroxy-3-methylbut-2-enyl diphosphate + 2 reduced [2Fe-2S]-[ferredoxin] + 2 H(+). It functions in the pathway isoprenoid biosynthesis; dimethylallyl diphosphate biosynthesis; dimethylallyl diphosphate from (2E)-4-hydroxy-3-methylbutenyl diphosphate: step 1/1. The protein operates within isoprenoid biosynthesis; isopentenyl diphosphate biosynthesis via DXP pathway; isopentenyl diphosphate from 1-deoxy-D-xylulose 5-phosphate: step 6/6. Its function is as follows. Catalyzes the conversion of 1-hydroxy-2-methyl-2-(E)-butenyl 4-diphosphate (HMBPP) into a mixture of isopentenyl diphosphate (IPP) and dimethylallyl diphosphate (DMAPP). Acts in the terminal step of the DOXP/MEP pathway for isoprenoid precursor biosynthesis. The protein is 4-hydroxy-3-methylbut-2-enyl diphosphate reductase of Chlorobium phaeobacteroides (strain DSM 266 / SMG 266 / 2430).